The sequence spans 207 residues: MALPFARCWNLYRWGTKRWGVTAGESRRGISFKLEEKTAHSSLALFRGDTGVKYGLVGLEPTKVALNLERFRDWAVVLADTTVTSGRHYWEVTVKRSQQFRIGVADVDMSRDSCVGADDRSWVFSYAQRKWHSMLANEKAPIKGIGQPEKVGLLLDYEAKKLSLVDVNRISVIHTLQTDFRGPVAPAFALWDGELLTHSGLEVPKGL.

Positions 12–207 constitute a B30.2/SPRY domain; the sequence is YRWGTKRWGV…HSGLEVPKGL (196 aa). 2 positions are modified to N6-acetyllysine: Lys53 and Lys130. An N6-succinyllysine modification is found at Lys139.

The protein is SPRY domain-containing protein 4 (Spryd4) of Rattus norvegicus (Rat).